A 1010-amino-acid polypeptide reads, in one-letter code: Ubiquitin conjugation factor E4 (1010 aa).

The interval 13–70 (AKLQQTNSEANSSKEPKESNIAPEPKKPDLKKRFIGSKATTSNSEQKEISPPVTSGAP) is disordered. Basic and acidic residues predominate over residues 24 to 44 (SSKEPKESNIAPEPKKPDLKK). Residues 930 to 1004 (DIPDYFLDPL…NTFLKSKRNK (75 aa)) form the U-box domain.

Belongs to the ubiquitin conjugation factor E4 family.

It is found in the cytoplasm. The protein localises to the nucleus. The protein operates within protein modification; protein ubiquitination. E4 ubiquitin chain-elongation enzyme specifically involved in polyubiquitin chain assembly. Binds to cdc48 and elongates mono- and diubiquitinated ERAD substrates presented by the ufd1-npl4-cdc48 (UNC) AAA ATPase complex to a chain length of 4 to 6 ubiquitin moieties. Delivers these polyubiquitinated substrates to downstream ERAD components, which target them to the proteasome. Enhances ubiquitination at 'Lys-48', but not at 'Lys-29' of the Ub moiety. This chain is Ubiquitin conjugation factor E4 (ufd2), found in Schizosaccharomyces pombe (strain 972 / ATCC 24843) (Fission yeast).